A 427-amino-acid polypeptide reads, in one-letter code: Beta-1,3-galactosyl-O-glycosyl-glycoprotein beta-1,6-N-acetylglucosaminyltransferase (427 aa).

Topologically, residues methionine 1–lysine 9 are cytoplasmic. Residues leucine 5–lysine 9 are mediates interaction with GOLPH3 and is necessary and sufficient for localization to the Golgi. Residues leucine 10–leucine 32 traverse the membrane as a helical; Signal-anchor for type II membrane protein segment. The tract at residues arginine 33 to phenylalanine 121 is stem region. Residues arginine 33–proline 427 lie on the Lumenal side of the membrane. N-linked (GlcNAc...) asparagine glycans are attached at residues asparagine 58 and asparagine 95. Intrachain disulfides connect cysteine 59/cysteine 412, cysteine 100/cysteine 172, cysteine 151/cysteine 199, and cysteine 372/cysteine 380. The tract at residues proline 122 to proline 427 is catalytic. UDP-N-acetyl-alpha-D-glucosamine contacts are provided by residues valine 128–histidine 130, aspartate 155–lysine 157, and tyrosine 187. Positions 243, 251, 254, 320, 341, and 358 each coordinate a glycoprotein. Glutamate 320 functions as the Nucleophile in the catalytic mechanism. UDP-N-acetyl-alpha-D-glucosamine contacts are provided by arginine 377 and lysine 400.

It belongs to the glycosyltransferase 14 family. Interacts with GOLPH3; may control GCNT1 retention in the Golgi. As to expression, expressed in tracheal submucosal glands and epithelium (at protein level).

It localises to the golgi apparatus membrane. The enzyme catalyses a 3-O-[beta-D-galactosyl-(1-&gt;3)-N-acetyl-alpha-D-galactosaminyl]-L-seryl-[protein] + UDP-N-acetyl-alpha-D-glucosamine = 3-O-{beta-D-galactosyl-(1-&gt;3)-[N-acetyl-beta-D-glucosaminyl-(1-&gt;6)]-N-acetyl-alpha-D-galactosaminyl}-L-seryl-[protein] + UDP + H(+). It carries out the reaction a 3-O-[beta-D-galactosyl-(1-&gt;3)-N-acetyl-alpha-D-galactosaminyl]-L-threonyl-[protein] + UDP-N-acetyl-alpha-D-glucosamine = a 3-O-{beta-D-galactosyl-(1-&gt;3)-[N-acetyl-beta-D-glucosaminyl-(1-&gt;6)]-N-acetyl-alpha-D-galactosaminyl}-L-threonyl-[protein] + UDP + H(+). It catalyses the reaction a globoside GalGb4Cer + UDP-N-acetyl-alpha-D-glucosamine = a globoside GlcNAc-(beta1-&gt;6)-GalGb4Cer + UDP + H(+). The catalysed reaction is a ganglioside GA1 + UDP-N-acetyl-alpha-D-glucosamine = a ganglioside beta-D-GlcNAc-(1-&gt;6)-GA1 + UDP + H(+). It functions in the pathway protein modification; protein glycosylation. It participates in glycolipid biosynthesis. Glycosyltransferase that catalyzes the transfer of an N-acetylglucosamine (GlcNAc) moiety in beta1-6 linkage from UDP-GlcNAc onto mucin-type core 1 O-glycan to form the branched mucin-type core 2 O-glycan. The catalysis is metal ion-independent and occurs with inversion of the anomeric configuration of sugar donor. Selectively involved in synthesis of mucin-type core 2 O-glycans that serve as scaffolds for the display of selectin ligand sialyl Lewis X epitope by myeloid cells, with an impact on homeostasis and recruitment to inflammatory sites. Can also act on glycolipid substrates. Transfers GlcNAc moiety to GalGb4Cer globosides in a reaction step to the synthesis of stage-specific embryonic antigen 1 (SSEA-1) determinant. Can use Galbeta1-3GalNAcalpha1- and Galbeta1-3GalNAcbeta1- oligosaccharide derivatives as acceptor substrates. The sequence is that of Beta-1,3-galactosyl-O-glycosyl-glycoprotein beta-1,6-N-acetylglucosaminyltransferase (GCNT1) from Bos taurus (Bovine).